A 275-amino-acid polypeptide reads, in one-letter code: Formamidopyrimidine-DNA glycosylase (275 aa).

Proline 2 acts as the Schiff-base intermediate with DNA in catalysis. Glutamate 3 serves as the catalytic Proton donor. The active-site Proton donor; for beta-elimination activity is the lysine 58. DNA is bound by residues histidine 91 and arginine 110. The FPG-type zinc finger occupies 238-272 (QVYGQTGKPCPRCGQAIVKLKVGGRGTHICPKCQK). Catalysis depends on arginine 262, which acts as the Proton donor; for delta-elimination activity.

Belongs to the FPG family. As to quaternary structure, monomer. Zn(2+) is required as a cofactor.

The enzyme catalyses Hydrolysis of DNA containing ring-opened 7-methylguanine residues, releasing 2,6-diamino-4-hydroxy-5-(N-methyl)formamidopyrimidine.. It catalyses the reaction 2'-deoxyribonucleotide-(2'-deoxyribose 5'-phosphate)-2'-deoxyribonucleotide-DNA = a 3'-end 2'-deoxyribonucleotide-(2,3-dehydro-2,3-deoxyribose 5'-phosphate)-DNA + a 5'-end 5'-phospho-2'-deoxyribonucleoside-DNA + H(+). In terms of biological role, involved in base excision repair of DNA damaged by oxidation or by mutagenic agents. Acts as a DNA glycosylase that recognizes and removes damaged bases. Has a preference for oxidized purines, such as 7,8-dihydro-8-oxoguanine (8-oxoG). Has AP (apurinic/apyrimidinic) lyase activity and introduces nicks in the DNA strand. Cleaves the DNA backbone by beta-delta elimination to generate a single-strand break at the site of the removed base with both 3'- and 5'-phosphates. The sequence is that of Formamidopyrimidine-DNA glycosylase from Streptococcus pyogenes serotype M18 (strain MGAS8232).